The sequence spans 161 residues: Large ribosomal subunit protein uL11 (161 aa).

This sequence belongs to the universal ribosomal protein uL11 family. In terms of assembly, part of the ribosomal stalk of the 50S ribosomal subunit. Interacts with L10 and the large rRNA to form the base of the stalk. L10 forms an elongated spine to which L12 dimers bind in a sequential fashion forming a multimeric L10(L12)X complex.

In terms of biological role, forms part of the ribosomal stalk which helps the ribosome interact with GTP-bound translation factors. This chain is Large ribosomal subunit protein uL11, found in Methanococcoides burtonii (strain DSM 6242 / NBRC 107633 / OCM 468 / ACE-M).